We begin with the raw amino-acid sequence, 162 residues long: UPF0114 protein Sden_0436 (162 aa).

Transmembrane regions (helical) follow at residues 15-35 (IMAP…IKFF), 53-73 (LVLI…LIMV), and 136-156 (IMWY…MGYL).

The protein belongs to the UPF0114 family.

It localises to the cell membrane. The sequence is that of UPF0114 protein Sden_0436 from Shewanella denitrificans (strain OS217 / ATCC BAA-1090 / DSM 15013).